A 349-amino-acid polypeptide reads, in one-letter code: ATPase GET3 (349 aa).

ATP is bound at residue 27 to 34 (KGGVGKTT). D58 is an active-site residue. ATP-binding residues include E240 and N267. 2 residues coordinate Zn(2+): C280 and C283.

Belongs to the arsA ATPase family. In terms of assembly, homodimer. Component of the Golgi to ER traffic (GET) complex, which is composed of GET1, GET2 and GET3. Within the complex, GET1 and GET2 form a heterotetramer which is stabilized by phosphatidylinositol binding and which binds to the GET3 homodimer. Interacts with the chloride channel protein GEF1.

The protein localises to the cytoplasm. The protein resides in the endoplasmic reticulum. Its subcellular location is the golgi apparatus. ATPase required for the post-translational delivery of tail-anchored (TA) proteins to the endoplasmic reticulum. Recognizes and selectively binds the transmembrane domain of TA proteins in the cytosol. This complex then targets to the endoplasmic reticulum by membrane-bound receptors GET1 and GET2, where the tail-anchored protein is released for insertion. This process is regulated by ATP binding and hydrolysis. ATP binding drives the homodimer towards the closed dimer state, facilitating recognition of newly synthesized TA membrane proteins. ATP hydrolysis is required for insertion. Subsequently, the homodimer reverts towards the open dimer state, lowering its affinity for the GET1-GET2 receptor, and returning it to the cytosol to initiate a new round of targeting. Cooperates with the HDEL receptor ERD2 to mediate the ATP-dependent retrieval of resident ER proteins that contain a C-terminal H-D-E-L retention signal from the Golgi to the ER. Involved in low-level resistance to the oxyanions arsenite and arsenate, and in heat tolerance. The protein is ATPase GET3 of Eremothecium gossypii (strain ATCC 10895 / CBS 109.51 / FGSC 9923 / NRRL Y-1056) (Yeast).